The chain runs to 411 residues: Acetylornithine aminotransferase (411 aa).

Pyridoxal 5'-phosphate-binding positions include 107-108 (GT) and Phe141. Arg144 contributes to the N(2)-acetyl-L-ornithine binding site. Residue 227–230 (DEIQ) participates in pyridoxal 5'-phosphate binding. Lys256 bears the N6-(pyridoxal phosphate)lysine mark. Thr284 is a binding site for N(2)-acetyl-L-ornithine. Thr285 is a binding site for pyridoxal 5'-phosphate.

Belongs to the class-III pyridoxal-phosphate-dependent aminotransferase family. ArgD subfamily. In terms of assembly, homodimer. Pyridoxal 5'-phosphate is required as a cofactor.

Its subcellular location is the cytoplasm. It catalyses the reaction N(2)-acetyl-L-ornithine + 2-oxoglutarate = N-acetyl-L-glutamate 5-semialdehyde + L-glutamate. Its pathway is amino-acid biosynthesis; L-arginine biosynthesis; N(2)-acetyl-L-ornithine from L-glutamate: step 4/4. This chain is Acetylornithine aminotransferase, found in Xylella fastidiosa (strain 9a5c).